Consider the following 494-residue polypeptide: MNAPVKPSNLIKGATGDWEMVIGLEVHAQVTSNAKLFSGASTAFGGEPNSHVSLVDAAMPGMLPVINEECVRQAVRTGLGLNAQINLRSVFDRKNYFYPDLPQGYQISQYKSPIVGEGEIVVDLADGASIAVGIERLHLEQDAGKSLHDQHADMSAIDLNRSGVALMEIVSKPDLRSSEQAKAYVTKLRTILRYLGTCDGDMEKGSLRADVNVSVRRPGAALGTRCEIKNVNSIRFIGQAIEHEARRQIGILEDGGSIDQETRLFDPDKGETRAMRSKEEAHDYRYFPDPDLLPLEFSQGFVEALKADLPELPDQKKTRFIGDFGLTPYDAAVLVGEHESANFYEAVLAGLANGRRDGKLAANWVINELFGRLNKESRGIAASPVSASQLAAIVDLIGEETISGKIAKDLFEIVWTEGGDPRTLVEARGMKQVTDMGAIEKAVDDIVAANPDKAAQVRAKPQMIGWFVGQVMKASGGKANPQAVNDLLKTKLGL.

The protein belongs to the GatB/GatE family. GatB subfamily. In terms of assembly, heterotrimer of A, B and C subunits.

The enzyme catalyses L-glutamyl-tRNA(Gln) + L-glutamine + ATP + H2O = L-glutaminyl-tRNA(Gln) + L-glutamate + ADP + phosphate + H(+). The catalysed reaction is L-aspartyl-tRNA(Asn) + L-glutamine + ATP + H2O = L-asparaginyl-tRNA(Asn) + L-glutamate + ADP + phosphate + 2 H(+). Its function is as follows. Allows the formation of correctly charged Asn-tRNA(Asn) or Gln-tRNA(Gln) through the transamidation of misacylated Asp-tRNA(Asn) or Glu-tRNA(Gln) in organisms which lack either or both of asparaginyl-tRNA or glutaminyl-tRNA synthetases. The reaction takes place in the presence of glutamine and ATP through an activated phospho-Asp-tRNA(Asn) or phospho-Glu-tRNA(Gln). The polypeptide is Aspartyl/glutamyl-tRNA(Asn/Gln) amidotransferase subunit B (Nitrobacter hamburgensis (strain DSM 10229 / NCIMB 13809 / X14)).